We begin with the raw amino-acid sequence, 405 residues long: Bifunctional enzyme IspD/IspF (405 aa).

Residues 1-246 (MLQMPSKQPI…KLSASLLPDV (246 aa)) form a 2-C-methyl-D-erythritol 4-phosphate cytidylyltransferase region. The segment at 247-405 (RTGNGYDVHQ…TATVVYRGRT (159 aa)) is 2-C-methyl-D-erythritol 2,4-cyclodiphosphate synthase. A divalent metal cation-binding residues include D253 and H255. Residues 253-255 (DVH) and 279-280 (HS) each bind 4-CDP-2-C-methyl-D-erythritol 2-phosphate. Residue H287 coordinates a divalent metal cation. 4-CDP-2-C-methyl-D-erythritol 2-phosphate is bound by residues 301 to 303 (DIG), 377 to 380 (TTNE), F384, and R387.

In the N-terminal section; belongs to the IspD/TarI cytidylyltransferase family. IspD subfamily. The protein in the C-terminal section; belongs to the IspF family. A divalent metal cation serves as cofactor.

It catalyses the reaction 2-C-methyl-D-erythritol 4-phosphate + CTP + H(+) = 4-CDP-2-C-methyl-D-erythritol + diphosphate. The catalysed reaction is 4-CDP-2-C-methyl-D-erythritol 2-phosphate = 2-C-methyl-D-erythritol 2,4-cyclic diphosphate + CMP. Its pathway is isoprenoid biosynthesis; isopentenyl diphosphate biosynthesis via DXP pathway; isopentenyl diphosphate from 1-deoxy-D-xylulose 5-phosphate: step 2/6. The protein operates within isoprenoid biosynthesis; isopentenyl diphosphate biosynthesis via DXP pathway; isopentenyl diphosphate from 1-deoxy-D-xylulose 5-phosphate: step 4/6. Functionally, bifunctional enzyme that catalyzes the formation of 4-diphosphocytidyl-2-C-methyl-D-erythritol from CTP and 2-C-methyl-D-erythritol 4-phosphate (MEP) (IspD), and catalyzes the conversion of 4-diphosphocytidyl-2-C-methyl-D-erythritol 2-phosphate (CDP-ME2P) to 2-C-methyl-D-erythritol 2,4-cyclodiphosphate (ME-CPP) with a corresponding release of cytidine 5-monophosphate (CMP) (IspF). The chain is Bifunctional enzyme IspD/IspF from Rhizobium etli (strain CIAT 652).